A 449-amino-acid polypeptide reads, in one-letter code: tRNA-2-methylthio-N(6)-dimethylallyladenosine synthase (449 aa).

The region spanning 4-119 is the MTTase N-terminal domain; the sequence is RTFHIETFGC…APQALDRLVE (116 aa). 6 residues coordinate [4Fe-4S] cluster: Cys-13, Cys-48, Cys-82, Cys-158, Cys-162, and Cys-165. The region spanning 144-375 is the Radical SAM core domain; that stretch reads GAVPASVFVN…QTLQNRLTER (232 aa). The TRAM domain occupies 378-446; it reads QDMVGRKVEV…KHSLLAEQAG (69 aa).

Belongs to the methylthiotransferase family. MiaB subfamily. In terms of assembly, monomer. [4Fe-4S] cluster is required as a cofactor.

The protein localises to the cytoplasm. It catalyses the reaction N(6)-dimethylallyladenosine(37) in tRNA + (sulfur carrier)-SH + AH2 + 2 S-adenosyl-L-methionine = 2-methylsulfanyl-N(6)-dimethylallyladenosine(37) in tRNA + (sulfur carrier)-H + 5'-deoxyadenosine + L-methionine + A + S-adenosyl-L-homocysteine + 2 H(+). In terms of biological role, catalyzes the methylthiolation of N6-(dimethylallyl)adenosine (i(6)A), leading to the formation of 2-methylthio-N6-(dimethylallyl)adenosine (ms(2)i(6)A) at position 37 in tRNAs that read codons beginning with uridine. This Nitratidesulfovibrio vulgaris (strain ATCC 29579 / DSM 644 / CCUG 34227 / NCIMB 8303 / VKM B-1760 / Hildenborough) (Desulfovibrio vulgaris) protein is tRNA-2-methylthio-N(6)-dimethylallyladenosine synthase.